The following is an 815-amino-acid chain: 1,4-alpha-glucan branching enzyme GlgB (815 aa).

Residue Asp-405 is the Nucleophile of the active site. Glu-458 acts as the Proton donor in catalysis.

This sequence belongs to the glycosyl hydrolase 13 family. GlgB subfamily. As to quaternary structure, monomer.

It carries out the reaction Transfers a segment of a (1-&gt;4)-alpha-D-glucan chain to a primary hydroxy group in a similar glucan chain.. It functions in the pathway glycan biosynthesis; glycogen biosynthesis. Its function is as follows. Catalyzes the formation of the alpha-1,6-glucosidic linkages in glycogen by scission of a 1,4-alpha-linked oligosaccharide from growing alpha-1,4-glucan chains and the subsequent attachment of the oligosaccharide to the alpha-1,6 position. In Histophilus somni (strain 2336) (Haemophilus somnus), this protein is 1,4-alpha-glucan branching enzyme GlgB.